The sequence spans 241 residues: Uridylate kinase (241 aa).

13-16 (KVSG) contributes to the ATP binding site. Residue G55 participates in UMP binding. Residues G56 and R60 each contribute to the ATP site. UMP-binding positions include D75 and 136–143 (TGNPFFTT). ATP-binding residues include T163, Q164, Y169, and D172.

This sequence belongs to the UMP kinase family. Homohexamer.

Its subcellular location is the cytoplasm. The enzyme catalyses UMP + ATP = UDP + ADP. It participates in pyrimidine metabolism; CTP biosynthesis via de novo pathway; UDP from UMP (UMPK route): step 1/1. Inhibited by UTP. In terms of biological role, catalyzes the reversible phosphorylation of UMP to UDP. The protein is Uridylate kinase of Parvibaculum lavamentivorans (strain DS-1 / DSM 13023 / NCIMB 13966).